A 264-amino-acid chain; its full sequence is Regulatory protein RecX (264 aa).

The protein belongs to the RecX family.

The protein resides in the cytoplasm. In terms of biological role, modulates RecA activity. The polypeptide is Regulatory protein RecX (Lacticaseibacillus casei (strain BL23) (Lactobacillus casei)).